The chain runs to 130 residues: Small ribosomal subunit protein uS11 (130 aa).

This sequence belongs to the universal ribosomal protein uS11 family. Part of the 30S ribosomal subunit. Interacts with proteins S7 and S18. Binds to IF-3.

Located on the platform of the 30S subunit, it bridges several disparate RNA helices of the 16S rRNA. Forms part of the Shine-Dalgarno cleft in the 70S ribosome. The sequence is that of Small ribosomal subunit protein uS11 from Acidiphilium cryptum (strain JF-5).